Consider the following 436-residue polypeptide: MKTLRELRNKISFDKNIDSGSSSSNIGGSSSNSSGTTNKRSSGNFNGSSASSSPSSSTNIDYNIPTFSNIQNIDWKSISSVEKIDFGNSNIFLLITFNNNNNINNINNLNCNCVNNNNNNICNNNCINNNNNTNDENPSIINNYNESQILLKSSSTIAHDVYAYVLEGILKYPIPEMRLLDFSNLEYTEMSYNLLIHSKDDQSLNDFIKSELEKSFFLILEYRNNGKRFNELNHKEYFSGSKGGKKFKQLGKIIAFDIFCNNFCKLPSPPLNWNSSTFFSNILCYDSPDKNGWYFSLINSNISFLNTSPFTIGYRDHLNRLKLLLFSIFQNPSTESVQIKLMRDHLLKCQGIKLSGSSVSYLQKGIAKGIKSIVNCINFTVLENTKEKVKNIVKLDNNNIWKKSIDSIYCPFLLDVLNEIVIEFANYREKTYFIKA.

The interval 14–58 is disordered; the sequence is DKNIDSGSSSSNIGGSSSNSSGTTNKRSSGNFNGSSASSSPSSST. A compositionally biased stretch (low complexity) spans 18 to 57; that stretch reads DSGSSSSNIGGSSSNSSGTTNKRSSGNFNGSSASSSPSSS.

This sequence belongs to the protein kinase superfamily. AFK Ser/Thr protein kinase family.

In Dictyostelium discoideum (Social amoeba), this protein is Putative actin-fragmin kinase DDB_G0268748.